Here is a 326-residue protein sequence, read N- to C-terminus: MSQVKRANENRETARFIKKHKKQVTNPIDEKNGTSNCIVRVPIALYVSLAPMYLENPLQGVMKQHLNPLVMKYNNKVGGVVLGYEGLKILDADPLSKEDTSEKLIKITPDTPFGFTWCHVNLYVWQPQVGDVLEGYIFIQSASHIGLLIHDAFNASIKKNNIPVDWTFVHNDVEEDADVINTDENNGNNNNEDNKDSNGGSNSLGKFSFGNRSLGHWVDSNGEPIDGKLRFTVRNVHTTGRVVSVDGTLISDADEEGNGYNSSRSQAESLPIVSNKKIVFDDEVSIENKESHKELDLPEVKEDNGSEIVYEENTSESNDGESSDSD.

Positions 179 to 202 are disordered; it reads VINTDENNGNNNNEDNKDSNGGSN. Residues 182 to 202 show a composition bias toward low complexity; it reads TDENNGNNNNEDNKDSNGGSN. Phosphoserine is present on residues serine 244, serine 251, serine 265, serine 269, and serine 285. The segment covering 288–304 has biased composition (basic and acidic residues); the sequence is NKESHKELDLPEVKEDN. A disordered region spans residues 288–326; the sequence is NKESHKELDLPEVKEDNGSEIVYEENTSESNDGESSDSD. Positions 309–326 are enriched in acidic residues; sequence VYEENTSESNDGESSDSD.

The protein belongs to the eukaryotic RPA43 RNA polymerase subunit family. Component of the RNA polymerase I (Pol I) complex consisting of 14 subunits: RPA135, RPA190, RPC40, RPA14, RPB5, RPO26, RPA43, RPB8, RPA12, RPB10, RPC19, RPC10, RPA49 and RPA34. The complex is composed of a horseshoe-shaped core containing ten subunits (RPA135, RPA190, RPB5, RPO26, RPB8, RPB10, RPC10, RPA12, RPC19 and RPC40) where RPA135 and RPA190 form the DNA-binding cleft. Outside of the core, RPA14 and RPA43 form the stalk that mediates interactions with transcription initiation factors and newly synthesized RNA. Interacts with RPO26/ABC23 and with the initiation factor RRN3. In terms of processing, contains an average of four phosphates per molecule.

It is found in the nucleus. The protein resides in the nucleolus. DNA-dependent RNA polymerases catalyze the transcription of DNA into RNA using the four ribonucleoside triphosphates as substrates. Component of RNA polymerase I (Pol I) which synthesizes ribosomal RNA precursors. Besides, RNA polymerase I has intrinsic RNA cleavage activity. Through its association with RRN3 is involved in recruitment of Pol I to rDNA promoters. In vitro, the A13-A43 subcomplex binds single-stranded RNA. In Saccharomyces cerevisiae (strain ATCC 204508 / S288c) (Baker's yeast), this protein is DNA-directed RNA polymerase I subunit RPA43 (RPA43).